Consider the following 341-residue polypeptide: Serine/threonine-protein kinase pdik1l (341 aa).

In terms of domain architecture, Protein kinase spans 8-332 (YELIQEVGRG…FELELRLVRI (325 aa)). 14-22 (VGRGSYGVV) contributes to the ATP binding site. The active-site Proton acceptor is D164.

The protein belongs to the protein kinase superfamily. Ser/Thr protein kinase family.

It localises to the nucleus. The catalysed reaction is L-seryl-[protein] + ATP = O-phospho-L-seryl-[protein] + ADP + H(+). It catalyses the reaction L-threonyl-[protein] + ATP = O-phospho-L-threonyl-[protein] + ADP + H(+). This is Serine/threonine-protein kinase pdik1l (pdik1l) from Danio rerio (Zebrafish).